Here is a 407-residue protein sequence, read N- to C-terminus: Putative glucose/galactose transporter (407 aa).

A run of 12 helical transmembrane segments spans residues 11 to 31, 47 to 67, 70 to 90, 96 to 116, 139 to 159, 180 to 200, 225 to 245, 263 to 283, 300 to 320, 321 to 341, 349 to 369, and 378 to 398; these read GSLTALFFLMGFITVLNDILI, LIQFCFFGAYFIMGGVFGNVI, IGYPFGVVLGFVITATGCALF, FGSYGFFLGALFILASGIVCL, VQAFNSLGTTLGPIFGSLLIF, VQMPYLGLAVFSLLLALIMYL, FVFGALGIFFYVGGEVAIGSF, HYLVYYWGGAMVGRFLGSVLM, IVLIALAIIIGGKIALFALTF, VGFFNSIMFPTIFSLATLNLG, GVISMAIVGGALIPPIQGAVT, and NLLYAYGVPLLCYFYILFFAL.

The protein belongs to the major facilitator superfamily. FHS transporter (TC 2.A.1.7) family.

The protein localises to the cell inner membrane. Its function is as follows. Intake of glucose and galactose. This chain is Putative glucose/galactose transporter (gluP), found in Helicobacter pylori (strain ATCC 700392 / 26695) (Campylobacter pylori).